Consider the following 476-residue polypeptide: 3-isopropylmalate dehydratase large subunit (476 aa).

Residues Cys357, Cys417, and Cys420 each coordinate [4Fe-4S] cluster.

Belongs to the aconitase/IPM isomerase family. LeuC type 1 subfamily. In terms of assembly, heterodimer of LeuC and LeuD. Requires [4Fe-4S] cluster as cofactor.

The catalysed reaction is (2R,3S)-3-isopropylmalate = (2S)-2-isopropylmalate. It participates in amino-acid biosynthesis; L-leucine biosynthesis; L-leucine from 3-methyl-2-oxobutanoate: step 2/4. Catalyzes the isomerization between 2-isopropylmalate and 3-isopropylmalate, via the formation of 2-isopropylmaleate. The chain is 3-isopropylmalate dehydratase large subunit from Mycobacterium leprae (strain TN).